The primary structure comprises 467 residues: Ribulose bisphosphate carboxylase large chain (467 aa).

Lys5 bears the N6,N6,N6-trimethyllysine mark. Substrate is bound by residues Asn114 and Thr164. Lys166 functions as the Proton acceptor in the catalytic mechanism. Position 168 (Lys168) interacts with substrate. Mg(2+)-binding residues include Lys192, Asp194, and Glu195. N6-carboxylysine is present on Lys192. Catalysis depends on His285, which acts as the Proton acceptor. Positions 286, 318, and 370 each coordinate substrate.

Belongs to the RuBisCO large chain family. Type I subfamily. Heterohexadecamer of 8 large chains and 8 small chains; disulfide-linked. The disulfide link is formed within the large subunit homodimers. It depends on Mg(2+) as a cofactor. In terms of processing, the disulfide bond which can form in the large chain dimeric partners within the hexadecamer appears to be associated with oxidative stress and protein turnover.

It localises to the plastid. Its subcellular location is the chloroplast. The enzyme catalyses 2 (2R)-3-phosphoglycerate + 2 H(+) = D-ribulose 1,5-bisphosphate + CO2 + H2O. It carries out the reaction D-ribulose 1,5-bisphosphate + O2 = 2-phosphoglycolate + (2R)-3-phosphoglycerate + 2 H(+). Its function is as follows. RuBisCO catalyzes two reactions: the carboxylation of D-ribulose 1,5-bisphosphate, the primary event in carbon dioxide fixation, as well as the oxidative fragmentation of the pentose substrate in the photorespiration process. Both reactions occur simultaneously and in competition at the same active site. The polypeptide is Ribulose bisphosphate carboxylase large chain (Hydrophyllum virginianum (Eastern waterleaf)).